A 361-amino-acid chain; its full sequence is Probable dual-specificity RNA methyltransferase RlmN (361 aa).

Glutamate 91 functions as the Proton acceptor in the catalytic mechanism. The Radical SAM core domain occupies 97-329 (QHYGLSVCVT…KKKGGNCVVR (233 aa)). Cysteine 104 and cysteine 340 form a disulfide bridge. [4Fe-4S] cluster-binding residues include cysteine 111, cysteine 115, and cysteine 118. S-adenosyl-L-methionine is bound by residues 163 to 164 (GE), serine 195, 218 to 220 (SLH), and asparagine 296. Cysteine 340 serves as the catalytic S-methylcysteine intermediate.

Belongs to the radical SAM superfamily. RlmN family. Requires [4Fe-4S] cluster as cofactor.

Its subcellular location is the cytoplasm. The catalysed reaction is adenosine(2503) in 23S rRNA + 2 reduced [2Fe-2S]-[ferredoxin] + 2 S-adenosyl-L-methionine = 2-methyladenosine(2503) in 23S rRNA + 5'-deoxyadenosine + L-methionine + 2 oxidized [2Fe-2S]-[ferredoxin] + S-adenosyl-L-homocysteine. The enzyme catalyses adenosine(37) in tRNA + 2 reduced [2Fe-2S]-[ferredoxin] + 2 S-adenosyl-L-methionine = 2-methyladenosine(37) in tRNA + 5'-deoxyadenosine + L-methionine + 2 oxidized [2Fe-2S]-[ferredoxin] + S-adenosyl-L-homocysteine. Functionally, specifically methylates position 2 of adenine 2503 in 23S rRNA and position 2 of adenine 37 in tRNAs. The polypeptide is Probable dual-specificity RNA methyltransferase RlmN (Streptococcus pneumoniae (strain P1031)).